The chain runs to 603 residues: Baeyer-Villiger monooxygenase (603 aa).

Residues Glu-94, 102–105 (TWYW), Asp-114, Tyr-120, and Val-164 each bind FAD. Residue 112–114 (HCD) participates in NADP(+) binding. Residues 248–254 (TGATGVQ), 271–272 (RT), and 386–387 (KR) each bind NADP(+).

It belongs to the FAD-binding monooxygenase family. FAD serves as cofactor.

Its function is as follows. Catalyzes a Baeyer-Villiger oxidation reaction, i.e. the insertion of an oxygen atom into a carbon-carbon bond adjacent to a carbonyl, which converts ketones to esters or lactones using NADPH and/or NADH as an electron donor. Thus, can convert bicyclo[3.2.0]hept-2-en-6-one into the oxidative lactone products 2-oxabicyclo[3.3.0]oct-6-en-3-one and 3-oxabicyclo[3.3.0]oct-6-en-2-one. Is also able to catalyze the sulfoxidation of methyl phenyl sulfide (thioanisole). This chain is Baeyer-Villiger monooxygenase, found in Streptomyces coelicolor (strain ATCC BAA-471 / A3(2) / M145).